The primary structure comprises 345 residues: S-adenosylmethionine:tRNA ribosyltransferase-isomerase (345 aa).

Belongs to the QueA family. In terms of assembly, monomer.

It is found in the cytoplasm. The enzyme catalyses 7-aminomethyl-7-carbaguanosine(34) in tRNA + S-adenosyl-L-methionine = epoxyqueuosine(34) in tRNA + adenine + L-methionine + 2 H(+). Its pathway is tRNA modification; tRNA-queuosine biosynthesis. Functionally, transfers and isomerizes the ribose moiety from AdoMet to the 7-aminomethyl group of 7-deazaguanine (preQ1-tRNA) to give epoxyqueuosine (oQ-tRNA). The chain is S-adenosylmethionine:tRNA ribosyltransferase-isomerase from Acinetobacter baumannii (strain AB0057).